We begin with the raw amino-acid sequence, 336 residues long: UDP-N-acetylmuramoylpentapeptide-lysine N(6)-alanyltransferase (336 aa).

Substrate-binding positions include 37–40 (KNNW), Tyr-104, Arg-212, Tyr-216, and Tyr-257.

Belongs to the FemABX family.

It catalyses the reaction UDP-N-acetyl-alpha-D-muramoyl-L-alanyl-gamma-D-glutamyl-L-lysyl-D-alanyl-D-alanine + L-alanyl-tRNA(Ala) = UDP-N-acetyl-alpha-D-muramoyl-L-alanyl-gamma-D-glutamyl-N(6)-(L-alanyl)-L-lysyl-D-alanyl-D-alanine + tRNA(Ala) + H(+). Involved in the synthesis of the bacterial cell wall. Catalyzes the addition of alanine into the interchain peptide bridge of peptidoglycan precursor using aminoacyl-tRNA(Ala) as amino acid donor. This alanine is added to the epsilon-amino group of the L-lysine of the peptidoglycan UDP-N-acetyl-alpha-D-muramoyl-L-alanyl-D-glutamyl-L-lysyl-D-alanyl-D-alanine, in a ribosome-independent mechanism. Specific for UDP-N-acetyl-muramoyl-pentapeptide. Has no activity toward UDP-N-acetyl-muramoyl-tetrapeptide or UDP-N-acetyl-muramoyl-tripeptide. Also acts on L-seryl-tRNA(Ser). This Weissella viridescens (Lactobacillus viridescens) protein is UDP-N-acetylmuramoylpentapeptide-lysine N(6)-alanyltransferase.